Here is a 216-residue protein sequence, read N- to C-terminus: GTPase IMAP family member GIMD1 (216 aa).

An AIG1-type G domain is found at 5–216 (KMTINLALFG…ENCYQVLTFK (212 aa)). GTP is bound by residues 14–22 (GMTQSGKSS), serine 35, and 147–149 (HAE).

The protein belongs to the TRAFAC class TrmE-Era-EngA-EngB-Septin-like GTPase superfamily. AIG1/Toc34/Toc159-like paraseptin GTPase family. IAN subfamily.

This chain is GTPase IMAP family member GIMD1 (GIMD1), found in Bos taurus (Bovine).